Consider the following 166-residue polypeptide: Orotate phosphoribosyltransferase (166 aa).

5-phospho-alpha-D-ribose 1-diphosphate-binding positions include Arg-83, Lys-84, Arg-86, His-88, and 108-116 (EDVVTTGNS). Thr-112 and Arg-140 together coordinate orotate.

This sequence belongs to the purine/pyrimidine phosphoribosyltransferase family. PyrE subfamily. In terms of assembly, homodimer. The cofactor is Mg(2+).

The catalysed reaction is orotidine 5'-phosphate + diphosphate = orotate + 5-phospho-alpha-D-ribose 1-diphosphate. Its pathway is pyrimidine metabolism; UMP biosynthesis via de novo pathway; UMP from orotate: step 1/2. Its function is as follows. Catalyzes the transfer of a ribosyl phosphate group from 5-phosphoribose 1-diphosphate to orotate, leading to the formation of orotidine monophosphate (OMP). This Thermoplasma volcanium (strain ATCC 51530 / DSM 4299 / JCM 9571 / NBRC 15438 / GSS1) protein is Orotate phosphoribosyltransferase.